An 80-amino-acid polypeptide reads, in one-letter code: Acyl carrier protein (80 aa).

Residues 2 to 77 enclose the Carrier domain; that stretch reads KNIEERIKKI…KSIDFIQNKN (76 aa). The residue at position 37 (Ser37) is an O-(pantetheine 4'-phosphoryl)serine.

It belongs to the acyl carrier protein (ACP) family. 4'-phosphopantetheine is transferred from CoA to a specific serine of apo-ACP by AcpS. This modification is essential for activity because fatty acids are bound in thioester linkage to the sulfhydryl of the prosthetic group.

It is found in the cytoplasm. It participates in lipid metabolism; fatty acid biosynthesis. Its function is as follows. Carrier of the growing fatty acid chain in fatty acid biosynthesis. This chain is Acyl carrier protein, found in Buchnera aphidicola subsp. Acyrthosiphon pisum (strain 5A).